The following is a 473-amino-acid chain: Hyaluronidase-2 (473 aa).

The first 20 residues, 1-20 (MRAGPGPTVTLALVLAVSWA), serve as a signal peptide directing secretion. 2 disulfides stabilise this stretch: C47/C340 and C211/C227. N-linked (GlcNAc...) asparagine glycosylation is found at N74 and N103. The Proton donor role is filled by E135. A glycan (N-linked (GlcNAc...) asparagine) is linked at N357. The region spanning 361–439 (ATQYCSRAQC…YLGWSGEQCQ (79 aa)) is the EGF-like domain. 3 disulfide bridges follow: C365-C376, C370-C427, and C429-C438. A lipid anchor (GPI-anchor amidated glycine) is attached at G448. A propeptide spans 449-473 (ASEAWAGSHLTSLLALAALAFTWTL) (removed in mature form).

It belongs to the glycosyl hydrolase 56 family. Interacts with MST1R. In terms of tissue distribution, widely expressed (at protein level).

It is found in the cell membrane. It carries out the reaction Random hydrolysis of (1-&gt;4)-linkages between N-acetyl-beta-D-glucosamine and D-glucuronate residues in hyaluronate.. Functionally, catalyzes hyaluronan degradation into small fragments that are endocytosed and degraded in lysosomes by HYAL1 and exoglycosidases. Essential for the breakdown of extracellular matrix hyaluronan. In Homo sapiens (Human), this protein is Hyaluronidase-2 (HYAL2).